Here is a 199-residue protein sequence, read N- to C-terminus: Protein-methionine-sulfoxide reductase heme-binding subunit MsrQ (199 aa).

5 consecutive transmembrane segments (helical) span residues 13 to 33 (VLLH…VDQG), 79 to 99 (LLGL…ALLE), 120 to 140 (LGVI…QIMM), 147 to 167 (WQKL…HYLW), and 169 to 189 (VKTL…LLLF).

The protein belongs to the MsrQ family. As to quaternary structure, heterodimer of a catalytic subunit (MsrP) and a heme-binding subunit (MsrQ). It depends on FMN as a cofactor. The cofactor is heme b.

The protein resides in the cell inner membrane. Part of the MsrPQ system that repairs oxidized periplasmic proteins containing methionine sulfoxide residues (Met-O), using respiratory chain electrons. Thus protects these proteins from oxidative-stress damage caused by reactive species of oxygen and chlorine generated by the host defense mechanisms. MsrPQ is essential for the maintenance of envelope integrity under bleach stress, rescuing a wide series of structurally unrelated periplasmic proteins from methionine oxidation. MsrQ provides electrons for reduction to the reductase catalytic subunit MsrP, using the quinone pool of the respiratory chain. This chain is Protein-methionine-sulfoxide reductase heme-binding subunit MsrQ, found in Pectobacterium carotovorum subsp. carotovorum (strain PC1).